Consider the following 94-residue polypeptide: Co-chaperonin GroES (94 aa).

This sequence belongs to the GroES chaperonin family. In terms of assembly, heptamer of 7 subunits arranged in a ring. Interacts with the chaperonin GroEL.

Its subcellular location is the cytoplasm. In terms of biological role, together with the chaperonin GroEL, plays an essential role in assisting protein folding. The GroEL-GroES system forms a nano-cage that allows encapsulation of the non-native substrate proteins and provides a physical environment optimized to promote and accelerate protein folding. GroES binds to the apical surface of the GroEL ring, thereby capping the opening of the GroEL channel. This is Co-chaperonin GroES from Streptococcus pneumoniae (strain ATCC BAA-255 / R6).